The chain runs to 268 residues: 4-hydroxy-tetrahydrodipicolinate reductase (268 aa).

NAD(+) contacts are provided by residues 10-15, E36, 99-101, and 123-126; these read GSTGRM, GTT, and APNM. Catalysis depends on H156, which acts as the Proton donor/acceptor. H157 is a binding site for (S)-2,3,4,5-tetrahydrodipicolinate. K160 serves as the catalytic Proton donor. Position 166–167 (166–167) interacts with (S)-2,3,4,5-tetrahydrodipicolinate; the sequence is GT.

This sequence belongs to the DapB family.

Its subcellular location is the cytoplasm. It catalyses the reaction (S)-2,3,4,5-tetrahydrodipicolinate + NAD(+) + H2O = (2S,4S)-4-hydroxy-2,3,4,5-tetrahydrodipicolinate + NADH + H(+). The enzyme catalyses (S)-2,3,4,5-tetrahydrodipicolinate + NADP(+) + H2O = (2S,4S)-4-hydroxy-2,3,4,5-tetrahydrodipicolinate + NADPH + H(+). It participates in amino-acid biosynthesis; L-lysine biosynthesis via DAP pathway; (S)-tetrahydrodipicolinate from L-aspartate: step 4/4. Its function is as follows. Catalyzes the conversion of 4-hydroxy-tetrahydrodipicolinate (HTPA) to tetrahydrodipicolinate. The polypeptide is 4-hydroxy-tetrahydrodipicolinate reductase (Nitrosomonas europaea (strain ATCC 19718 / CIP 103999 / KCTC 2705 / NBRC 14298)).